The primary structure comprises 412 residues: Alanyl-tRNA editing protein Aarsd1 (412 aa).

Residues His109 and His113 each contribute to the Zn(2+) site. Ser174 carries the phosphoserine modification. Zn(2+)-binding residues include Cys209 and His213.

Belongs to the class-II aminoacyl-tRNA synthetase family. Alax-L subfamily. Zn(2+) is required as a cofactor.

Its subcellular location is the cytoplasm. Functionally, functions in trans to edit the amino acid moiety from incorrectly charged tRNA(Ala). The protein is Alanyl-tRNA editing protein Aarsd1 (Aarsd1) of Rattus norvegicus (Rat).